We begin with the raw amino-acid sequence, 433 residues long: Enolase (433 aa).

Gln-163 serves as a coordination point for (2R)-2-phosphoglycerate. Glu-205 functions as the Proton donor in the catalytic mechanism. Residues Asp-242, Glu-286, and Asp-313 each contribute to the Mg(2+) site. (2R)-2-phosphoglycerate-binding residues include Lys-338, Arg-367, Ser-368, and Lys-389. Catalysis depends on Lys-338, which acts as the Proton acceptor.

Belongs to the enolase family. Mg(2+) is required as a cofactor.

Its subcellular location is the cytoplasm. The protein localises to the secreted. It localises to the cell surface. The enzyme catalyses (2R)-2-phosphoglycerate = phosphoenolpyruvate + H2O. The protein operates within carbohydrate degradation; glycolysis; pyruvate from D-glyceraldehyde 3-phosphate: step 4/5. Catalyzes the reversible conversion of 2-phosphoglycerate (2-PG) into phosphoenolpyruvate (PEP). It is essential for the degradation of carbohydrates via glycolysis. In Koribacter versatilis (strain Ellin345), this protein is Enolase.